Here is a 169-residue protein sequence, read N- to C-terminus: Vimentin-type intermediate filament-associated coiled-coil protein (169 aa).

Positions 7-89 (LQIREANAHL…VHSLQATVHQ (83 aa)) form a coiled coil. The span at 126–135 (RLGPLPASDP) shows a compositional bias: low complexity. The tract at residues 126-169 (RLGPLPASDPGHPPPGGPGPPLDNSTGEEADRDHLQPAVFGTTV) is disordered. Over residues 136–146 (GHPPPGGPGPP) the composition is skewed to pro residues.

The protein resides in the cytoplasm. This chain is Vimentin-type intermediate filament-associated coiled-coil protein (VMAC), found in Homo sapiens (Human).